The following is a 226-amino-acid chain: Transmembrane protein 204 (226 aa).

Residues 1–5 (MTVQK) lie on the Cytoplasmic side of the membrane. Residues 6–26 (LVATAVLVALVSLILNNAAAF) form a helical membrane-spanning segment. Over 27-103 (TPNWVYQTLE…LQFDMMRACN (77 aa)) the chain is Extracellular. Residues 104-124 (LVATAALAVGQITFILGLTGL) traverse the membrane as a helical segment. Residues 125 to 136 (PLMSPESQCWEE) lie on the Cytoplasmic side of the membrane. A helical membrane pass occupies residues 137 to 157 (AMAAAFQLASFVLVIGLVTFY). The Extracellular portion of the chain corresponds to 158–170 (RIGPYTNLSWSCY). An N-linked (GlcNAc...) asparagine glycan is attached at N164. A helical membrane pass occupies residues 171-191 (LNIGACLLATLAAAMLIWNIL). Residues 192 to 226 (HRREDCMAPRVIVISRSLTARFRRGLDNDYVESPC) are Cytoplasmic-facing.

The protein localises to the cell junction. The protein resides in the adherens junction. It is found in the cell membrane. Functionally, can influence paracellular permeability. Appears to be involved in cell-cell interactions through adherens. This is Transmembrane protein 204 (Tmem204) from Rattus norvegicus (Rat).